Consider the following 216-residue polypeptide: Small ribosomal subunit protein uS3c (216 aa).

The region spanning isoleucine 43–alanine 116 is the KH type-2 domain.

Belongs to the universal ribosomal protein uS3 family. In terms of assembly, part of the 30S ribosomal subunit.

It localises to the plastid. The protein resides in the chloroplast. The sequence is that of Small ribosomal subunit protein uS3c (rps3) from Drimys granadensis.